Reading from the N-terminus, the 100-residue chain is Small ribosomal subunit protein uS14c (100 aa).

The protein belongs to the universal ribosomal protein uS14 family. As to quaternary structure, part of the 30S ribosomal subunit.

The protein resides in the plastid. It is found in the chloroplast. Binds 16S rRNA, required for the assembly of 30S particles. The protein is Small ribosomal subunit protein uS14c of Amborella trichopoda.